We begin with the raw amino-acid sequence, 194 residues long: CASP-like protein 2C2 (194 aa).

At 1–27 (MAAGQPRPPPPPSSVRTERVLRAACAA) the chain is on the cytoplasmic side. The chain crosses the membrane as a helical span at residues 28 to 48 (MAAAGALLLGFSAETKTVIFV). The Extracellular portion of the chain corresponds to 49–58 (QKKAVPKDVQ). Residues 59 to 79 (ALWVLIVAAAAAAAYHAAQLA) form a helical membrane-spanning segment. Over 80–113 (RCLCMDRLAGGGGGCRRLRRAVACATFLLDKGCA) the chain is Cytoplasmic. Residues 114-134 (YMVLATTVAALQACFVGLLGV) form a helical membrane-spanning segment. Residues 135–152 (EALQWSKLCNIYTRFCEQ) lie on the Extracellular side of the membrane. The helical transmembrane segment at 153–173 (AAAGMVCSLVAAAGMAVLSAF) threads the bilayer. The Cytoplasmic segment spans residues 174–194 (SARDLFRRRRPCSPCVQVQQV).

It belongs to the Casparian strip membrane proteins (CASP) family. Homodimer and heterodimers.

Its subcellular location is the cell membrane. This Sorghum bicolor (Sorghum) protein is CASP-like protein 2C2.